The chain runs to 547 residues: Chaperonin GroEL (547 aa).

ATP-binding positions include 30-33 (TLGP), K51, 87-91 (DGTTT), G415, and D496. Positions 525 to 547 (KPEPKSPAGGPGMGGMGGMDGMM) are disordered. Residues 533–547 (GGPGMGGMGGMDGMM) are compositionally biased toward gly residues.

This sequence belongs to the chaperonin (HSP60) family. Forms a cylinder of 14 subunits composed of two heptameric rings stacked back-to-back. Interacts with the co-chaperonin GroES.

Its subcellular location is the cytoplasm. The enzyme catalyses ATP + H2O + a folded polypeptide = ADP + phosphate + an unfolded polypeptide.. Functionally, together with its co-chaperonin GroES, plays an essential role in assisting protein folding. The GroEL-GroES system forms a nano-cage that allows encapsulation of the non-native substrate proteins and provides a physical environment optimized to promote and accelerate protein folding. The chain is Chaperonin GroEL from Cereibacter sphaeroides (strain ATCC 17029 / ATH 2.4.9) (Rhodobacter sphaeroides).